Here is a 509-residue protein sequence, read N- to C-terminus: Probable cation transporter HKT2;3 (509 aa).

Residues 1 to 32 lie on the Cytoplasmic side of the membrane; that stretch reads MPIRLHIFVNSARHAINSSAFICRFIAYHLSP. The next 2 helical transmembrane spans lie at 33–53 and 96–116; these read LLIH…SLVV and ILTL…GLVL. Residues 117–164 are Cytoplasmic-facing; it reads ESSKQNKHDPENRRVSSVTVCKQSQLEEATPQTPSMNSIDIKKRCLKY. 2 helical membrane-spanning segments follow: residues 165–185 and 237–257; these read LVFV…LLVF and GLLL…PVFL. Residues 258–296 lie on the Cytoplasmic side of the membrane; sequence RLVIWALRGLRLAKAEEPDFMMNNSSAVGFSHLLPNLQT. Helical transmembrane passes span 297-317 and 353-373; these read IFLA…FCCL and CSLV…TPSL. Topologically, residues 374 to 400 are cytoplasmic; that stretch reads TKLFSACQDHKRIGPESDDRTSKGKPF. The next 2 membrane-spanning stretches (helical) occupy residues 401–421 and 474–494; these read LKMM…LVCI and AYNF…LAML. Over 495-509 the chain is Cytoplasmic; the sequence is CGRLNSKDSTSARTR.

The protein belongs to the TrkH potassium transport family. HKT (TC 2.A.38.3) subfamily.

The protein localises to the membrane. In terms of biological role, probable cation transporter. May be involved in regulation of potassium-sodium homeostasis. The polypeptide is Probable cation transporter HKT2;3 (Oryza sativa subsp. japonica (Rice)).